A 156-amino-acid polypeptide reads, in one-letter code: Small ribosomal subunit protein uS7 (156 aa).

Belongs to the universal ribosomal protein uS7 family. In terms of assembly, part of the 30S ribosomal subunit. Contacts proteins S9 and S11.

Its function is as follows. One of the primary rRNA binding proteins, it binds directly to 16S rRNA where it nucleates assembly of the head domain of the 30S subunit. Is located at the subunit interface close to the decoding center, probably blocks exit of the E-site tRNA. The chain is Small ribosomal subunit protein uS7 from Hahella chejuensis (strain KCTC 2396).